The primary structure comprises 315 residues: Probable cell division protein WhiA (315 aa).

Positions 280–313 (SLRELGKMLNPPVGKSGVNHRLRRIEKIADELKQ) form a DNA-binding region, H-T-H motif.

It belongs to the WhiA family.

Involved in cell division and chromosome segregation. The chain is Probable cell division protein WhiA from Clostridium botulinum (strain ATCC 19397 / Type A).